The primary structure comprises 345 residues: tRNA pseudouridine synthase B (345 aa).

Residue Asp-39 is the Nucleophile of the active site.

This sequence belongs to the pseudouridine synthase TruB family. Type 1 subfamily.

It carries out the reaction uridine(55) in tRNA = pseudouridine(55) in tRNA. Responsible for synthesis of pseudouridine from uracil-55 in the psi GC loop of transfer RNAs. The polypeptide is tRNA pseudouridine synthase B (Rickettsia rickettsii (strain Iowa)).